The sequence spans 304 residues: Voltage-dependent anion channel-forming protein YneE (304 aa).

4 helical membrane passes run 28-48 (LLLN…YTHL), 50-70 (IKFT…FLGF), 194-214 (VLAG…TLIL), and 220-240 (LFCI…TPFI).

The protein belongs to the anion channel-forming bestrophin (TC 1.A.46) family.

The protein resides in the cell membrane. In Escherichia coli (strain K12), this protein is Voltage-dependent anion channel-forming protein YneE (yneE).